A 228-amino-acid chain; its full sequence is uncharacterized protein (228 aa).

Residues 7-228 (VEVHHLKKSV…LVNGQLQEEA (222 aa)) enclose the ABC transporter domain. 43 to 50 (GESGSGKS) serves as a coordination point for ATP.

This sequence belongs to the ABC transporter superfamily.

This is an uncharacterized protein from Escherichia coli O157:H7.